A 198-amino-acid chain; its full sequence is MSEIFIYPQATCIAGVDEVGRGPLVGAVVTAAVILDPTRPIVGLADSKQLSEKRRLALYDEIKEKALAWSLGRAEPEEIDQLNILHATMLAMQRAVAGLAVVPDFVLIDGNRCPALPMPSQAVVKGDSRVAEISAASIMAKVTRDREMVELDERFPAYGFAQHKGYPTAFHLEKLAALGATEFHRRSFAPVKRALGLA.

An RNase H type-2 domain is found at 11–198 (TCIAGVDEVG…APVKRALGLA (188 aa)). Residues D17, E18, and D109 each coordinate a divalent metal cation.

Belongs to the RNase HII family. The cofactor is Mn(2+). Requires Mg(2+) as cofactor.

It is found in the cytoplasm. It catalyses the reaction Endonucleolytic cleavage to 5'-phosphomonoester.. Its function is as follows. Endonuclease that specifically degrades the RNA of RNA-DNA hybrids. The protein is Ribonuclease HII of Pectobacterium carotovorum subsp. carotovorum (strain PC1).